Reading from the N-terminus, the 66-residue chain is Beta-toxin ChFII.7 (66 aa).

The LCN-type CS-alpha/beta domain maps to 1–66; that stretch reads KEGYLVNHST…VWPLPKKTCN (66 aa). 4 disulfide bridges follow: Cys-12–Cys-65, Cys-16–Cys-41, Cys-25–Cys-46, and Cys-29–Cys-48. Asn-66 carries the asparagine amide modification.

As to expression, expressed by the venom gland.

The protein resides in the secreted. Functionally, beta toxins bind voltage independently at site-4 of sodium channels (Nav) and shift the activation voltage toward more negative potentials, thereby affecting sodium channel activation CC and promoting spontaneous and repetitive firing. This Centruroides hirsutipalpus (Scorpion) protein is Beta-toxin ChFII.7.